We begin with the raw amino-acid sequence, 840 residues long: UPF0508 protein SCY_2952 (840 aa).

Belongs to the UPF0508 family.

This chain is UPF0508 protein SCY_2952, found in Saccharomyces cerevisiae (strain YJM789) (Baker's yeast).